A 746-amino-acid chain; its full sequence is Proline--tRNA ligase (746 aa).

The interval 1–223 (MNNNTNGEII…NSNNNNNNNN (223 aa)) is required for editing of incorrectly charged tRNA. Positions 181-201 (TSKARVDKKEDVQEEMAKNEE) are enriched in basic and acidic residues. The disordered stretch occupies residues 181-226 (TSKARVDKKEDVQEEMAKNEELQNNNNNNKNNSNSNNNNNNNNNHI). Low complexity predominate over residues 204–224 (NNNNNNKNNSNSNNNNNNNNN). Arg390 contributes to the L-proline binding site. ATP contacts are provided by residues 390–394 (RWEFK), 401–405 (RTREF), and 475–477 (QAA). Residue His480 participates in L-proline binding. 512-514 (TTR) serves as a coordination point for ATP.

It belongs to the class-II aminoacyl-tRNA synthetase family. ProS type 3 subfamily. Homodimer.

Its subcellular location is the cytoplasm. The catalysed reaction is tRNA(Pro) + L-proline + ATP = L-prolyl-tRNA(Pro) + AMP + diphosphate. With respect to regulation, inhibited by the quinazolinone-based compound febrifugine from the Chinese plant Dichroa febrifuga which is used to treat malaria-associated fever. Also inhibited by febrifugine derivatives such as halofuginone. Its function is as follows. Catalyzes the attachment of proline to tRNA(Pro) in a two-step reaction: proline is first activated by ATP to form Pro-AMP and then transferred to the acceptor end of tRNA(Pro). Functions in trans to edit the amino acid moiety from incorrectly charged Ala-tRNA(Pro). Has no activity on correctly charged Pro-tRNA(Pro) or Ala-tRNA(Ala). The protein is Proline--tRNA ligase of Plasmodium falciparum (isolate 3D7).